The following is a 798-amino-acid chain: Phenylalanine--tRNA ligase beta subunit (798 aa).

A tRNA-binding domain is found at 39–148; sequence FDAIEPIVVG…ESFRIGARLV (110 aa). The region spanning 402-478 is the B5 domain; it reads WQAPVLRFRR…RVRGMDTIEP (77 aa). Positions 456, 462, 465, and 466 each coordinate Mg(2+). The FDX-ACB domain maps to 708 to 798; sequence PVYPPVRRDI…SLVEKLPVRI (91 aa).

This sequence belongs to the phenylalanyl-tRNA synthetase beta subunit family. Type 1 subfamily. Tetramer of two alpha and two beta subunits. Mg(2+) is required as a cofactor.

The protein localises to the cytoplasm. The catalysed reaction is tRNA(Phe) + L-phenylalanine + ATP = L-phenylalanyl-tRNA(Phe) + AMP + diphosphate + H(+). In Nitratidesulfovibrio vulgaris (strain ATCC 29579 / DSM 644 / CCUG 34227 / NCIMB 8303 / VKM B-1760 / Hildenborough) (Desulfovibrio vulgaris), this protein is Phenylalanine--tRNA ligase beta subunit.